A 101-amino-acid polypeptide reads, in one-letter code: DNA-binding protein Fis (101 aa).

A DNA-binding region (H-T-H motif) is located at residues 77 to 96; it reads QTRAANMLGINRGTLRKKLK.

Belongs to the transcriptional regulatory Fis family. Homodimer.

Its function is as follows. Activates ribosomal RNA transcription. Plays a direct role in upstream activation of rRNA promoters. The chain is DNA-binding protein Fis from Shewanella halifaxensis (strain HAW-EB4).